The primary structure comprises 580 residues: Aspartate--tRNA ligase (580 aa).

Glu173 serves as a coordination point for L-aspartate. Residues 195–198 form an aspartate region; sequence QIYK. L-aspartate is bound at residue Arg217. Residues 217–219 and Gln226 contribute to the ATP site; that span reads RDE. Position 443 (His443) interacts with L-aspartate. An ATP-binding site is contributed by Glu477. Residue Arg484 coordinates L-aspartate. Residue 529 to 532 coordinates ATP; sequence GIER.

The protein belongs to the class-II aminoacyl-tRNA synthetase family. Type 1 subfamily. As to quaternary structure, homodimer.

It is found in the cytoplasm. It carries out the reaction tRNA(Asp) + L-aspartate + ATP = L-aspartyl-tRNA(Asp) + AMP + diphosphate. Catalyzes the attachment of L-aspartate to tRNA(Asp) in a two-step reaction: L-aspartate is first activated by ATP to form Asp-AMP and then transferred to the acceptor end of tRNA(Asp). This is Aspartate--tRNA ligase from Malacoplasma penetrans (strain HF-2) (Mycoplasma penetrans).